The chain runs to 591 residues: Aspartate--tRNA(Asp/Asn) ligase (591 aa).

Glu174 is a binding site for L-aspartate. The aspartate stretch occupies residues 198–201; sequence QLFK. Arg220 provides a ligand contact to L-aspartate. Residues 220 to 222 and Gln229 each bind ATP; that span reads RDE. Residue His450 coordinates L-aspartate. Glu483 lines the ATP pocket. Arg490 is a binding site for L-aspartate. ATP is bound at residue 535–538; that stretch reads GLDR.

The protein belongs to the class-II aminoacyl-tRNA synthetase family. Type 1 subfamily. As to quaternary structure, homodimer.

It localises to the cytoplasm. It catalyses the reaction tRNA(Asx) + L-aspartate + ATP = L-aspartyl-tRNA(Asx) + AMP + diphosphate. Aspartyl-tRNA synthetase with relaxed tRNA specificity since it is able to aspartylate not only its cognate tRNA(Asp) but also tRNA(Asn). Reaction proceeds in two steps: L-aspartate is first activated by ATP to form Asp-AMP and then transferred to the acceptor end of tRNA(Asp/Asn). The polypeptide is Aspartate--tRNA(Asp/Asn) ligase (Ectopseudomonas mendocina (strain ymp) (Pseudomonas mendocina)).